Consider the following 203-residue polypeptide: MSSKLRVGVAGPVGSGKTALLETLCLSLKNNYEIAVVTNDIYTKEDANFLINKKVLEEGRIIGVETGGCPHTAIREDCSLNKNAVLDLENRYKPLDFVFVESGGDNLASSFSPELVDLSIYVIDVSAGDKIPRKGGPGITRSDLLLINKIDLADMVGANLNIMKSDTEFMRKGKPWFFTNLSTGIGVEEITRFLESQIPNNQN.

11–18 (GPVGSGKT) is a binding site for GTP.

It belongs to the SIMIBI class G3E GTPase family. UreG subfamily. In terms of assembly, homodimer. UreD, UreF and UreG form a complex that acts as a GTP-hydrolysis-dependent molecular chaperone, activating the urease apoprotein by helping to assemble the nickel containing metallocenter of UreC. The UreE protein probably delivers the nickel.

It is found in the cytoplasm. Its function is as follows. Facilitates the functional incorporation of the urease nickel metallocenter. This process requires GTP hydrolysis, probably effectuated by UreG. The polypeptide is Urease accessory protein UreG (Prochlorococcus marinus (strain MIT 9312)).